The primary structure comprises 909 residues: MKLNRLWFCLLIIIPGFLVAAYLGSHFLTDWYWFAEVGYRQVFLTRLLSEVGIRLGTIAFFFLFFYLNLLFTRKSLHLSPPEGRENWTLKEYLIDRFITSRRLGILYLLLSLAGALIFSPLAAGKWLVVQEYLRATPFGLADPLFGRDVSFYIFKLPLYHFLYKLLITAVVGAVLVTGFFYFIFNPRELLGLRRGHFSRPLVHFSTLVALLFLIQAWGFRLQALDLVRSSRGVAFGASYTDIHALLPGYNILGWVAVACGLIIVLNAFRRNLKLVSAGILSFMAAYFLLVIAVPLAVQKFQVEPNEFAREEPYLRYNINFTRRAYGLDRITIQEFPALDNLTPASLREEGATLDNIRLWDYRPLEQTYSQLQEIRSYYSFKDIDVDRYTLDGRERQVMLAARELDQNKLPDRARTWINEKMRYTHGYGLAMNPANTVTAGGQPEFIAGDLPFHSSAGLQVNEPRIYYGELTGDYVITGGTAAEFDYPVTGEDNFVETRYQGRGGVPINTPWRRLVFAFRFHDYRLLMSNGLTPQSKILYYRNIQERVRKIMPYLRYDADPYLVVAGGRLYWFLDAYTITNMYPYSEPNSGGFNYIRNSVKVVIDAYNGSVDYYLVDPGDPLAQTLARIFPGLFKPREDMPAGLQQHLRYPPDLLSIQAQMLTNYHMENTMLFYNKEDAWSIAEEMVGDKRQAMDPYYTLMRLPGETQAEYILMLPFTPARKVNMIAWLAARNDGPHYGQLLLYQFPKNRSIYGPMQVEARIDQEPRISQQLTLWDQHGSQVIRGNLLVIPIKGSLLYVEPIFLQAQESKLPELRQVVVAYEEKIAMADTLAGALQVIFGTQTPAPAASPQPPSQAATGSPGNLSELIKEANRLYSEAQDRLKQGDWAGYGENLKKLEQVLQEMGQKVAE.

The next 7 helical transmembrane spans lie at 8–28, 51–71, 103–123, 165–185, 201–221, 245–265, and 277–297; these read FCLLIIIPGFLVAAYLGSHFL, VGIRLGTIAFFFLFFYLNLLF, LGILYLLLSLAGALIFSPLAA, LLITAVVGAVLVTGFFYFIFN, LVHFSTLVALLFLIQAWGFRL, LLPGYNILGWVAVACGLIIVL, and AGILSFMAAYFLLVIAVPLAV. The segment at 843–862 is disordered; sequence PAPAASPQPPSQAATGSPGN.

It belongs to the UPF0182 family.

Its subcellular location is the cell membrane. The chain is UPF0182 protein Moth_1139 from Moorella thermoacetica (strain ATCC 39073 / JCM 9320).